The following is a 96-amino-acid chain: Prokineticin Bm8-b (96 aa).

The first 19 residues, 1–19, serve as a signal peptide directing secretion; it reads MKCFAQIVVLLLVIAFSHG. Disulfide bonds link Cys32–Cys50, Cys37–Cys78, Cys60–Cys86, and Cys80–Cys95.

The protein belongs to the AVIT (prokineticin) family. In terms of tissue distribution, expressed by the skin glands.

The protein resides in the secreted. Functionally, potent agonist for both PKR1/PROKR1 and PKR2/PROKR2, and inducer of a potent and long-lasting hyperalgesia. Also potentiates capsaicin-induced TRPV1 current, when tested on DRG neurons. At subnanomolar concentrations, this protein both induces potent chemotaxis of macrophages and stimulates LPS-induced production of the pro-inflammatory cytokines IL-1 and IL-12. In vivo, potently stimulates the contraction of the guinea-pig gastrointestinal (GI) smooth muscle (nanomolar concentration). The sequence is that of Prokineticin Bm8-b from Bombina maxima (Giant fire-bellied toad).